We begin with the raw amino-acid sequence, 262 residues long: Hydroxyethylthiazole kinase (262 aa).

M50 contributes to the substrate binding site. 2 residues coordinate ATP: R125 and T171. Residue G198 participates in substrate binding.

It belongs to the Thz kinase family. It depends on Mg(2+) as a cofactor.

The catalysed reaction is 5-(2-hydroxyethyl)-4-methylthiazole + ATP = 4-methyl-5-(2-phosphooxyethyl)-thiazole + ADP + H(+). Its pathway is cofactor biosynthesis; thiamine diphosphate biosynthesis; 4-methyl-5-(2-phosphoethyl)-thiazole from 5-(2-hydroxyethyl)-4-methylthiazole: step 1/1. Catalyzes the phosphorylation of the hydroxyl group of 4-methyl-5-beta-hydroxyethylthiazole (THZ). In Shigella flexneri serotype 5b (strain 8401), this protein is Hydroxyethylthiazole kinase.